A 731-amino-acid chain; its full sequence is Small conductance calcium-activated potassium channel protein 3 (731 aa).

The segment covering 1–11 (MDTSGHFHDSG) has biased composition (basic and acidic residues). Disordered regions lie at residues 1-170 (MDTS…SNPF) and 239-258 (ATHN…FPKA). Positions 30–40 (QQQQQQQQQQQ) are enriched in low complexity. Pro residues predominate over residues 41–51 (QPPPPAPPAAP). A compositionally biased stretch (low complexity) spans 52 to 95 (QQPLGPSLQPQPPQLQQQQQQQQQQQQQQPPHPLSQLAQLQSQP). A compositionally biased stretch (polar residues) spans 112-132 (PSSNSTAILHPSSRQGSQLNL). Over residues 138-147 (GHSPSSTATS) the composition is skewed to low complexity. Residue Ser-167 is modified to Phosphoserine. Residues 239-256 (ATHNHQHAGTTASSTTFP) are compositionally biased toward polar residues. The helical transmembrane segment at 288 to 308 (LIFGMFGIVVMVIETELSWGL) threads the bilayer. The helical transmembrane segment at 315-335 (FSLALKCLISLSTIILLGLII) threads the bilayer. Residues 366 to 386 (ISLEMLVCAIHPIPGEYKFFW) form a helical membrane-spanning segment. The chain crosses the membrane as a helical span at residues 405–425 (IILSIPMFLRLYLIARVMLLH). The helical transmembrane segment at 454-474 (LMTICPGTVLLVFSISLWIIA) threads the bilayer. Positions 494–514 (FLGAMWLISITFLSIGYGDMV) form an intramembrane region, pore-forming. The helical transmembrane segment at 523–543 (VCLLTGIMGAGCTALVVAVVA) threads the bilayer. Residues 561-637 (DTQLTKRIKN…LVDLSKMQNV (77 aa)) form a calmodulin-binding region. The stretch at 642-669 (ITELNDRSEDLEKQIGSLESKLEHLTAS) forms a coiled coil. The disordered stretch occupies residues 709–731 (ISDSPIGVSSTSFPTPYTSSSSC). Positions 717 to 731 (SSTSFPTPYTSSSSC) are enriched in low complexity.

The protein belongs to the potassium channel KCNN family. KCa2.3/KCNN3 subfamily. Homodimer. Heteromultimer with KCNN2 or KCNN1; this modulates plasma membrane expression and consequently the small conductance calcium-activated potassium channel activity. The complex is composed of 4 channel subunits each of which binds to a calmodulin subunit which regulates the channel activity through calcium-binding. Interacts with CALM1. In terms of tissue distribution, widely distributed in human tissues and is present at 20-60% of KCNN3 in the brain.

It localises to the cell membrane. Its subcellular location is the cytoplasm. The protein localises to the myofibril. It is found in the sarcomere. The protein resides in the z line. The enzyme catalyses K(+)(in) = K(+)(out). Its activity is regulated as follows. Inhibited by bee venom neurotoxin apamin. Functionally, small conductance calcium-activated potassium channel that mediates the voltage-independent transmembrane transfer of potassium across the cell membrane through a constitutive interaction with calmodulin which binds the intracellular calcium allowing its opening. The current is characterized by a voltage-independent activation, an intracellular calcium concentration increase-dependent activation and a single-channel conductance of 10 picosiemens. Also presents an inwardly rectifying current, thus reducing its already small outward conductance of potassium ions, which is particularly the case when the membrane potential displays positive values, above + 20 mV. Activation is followed by membrane hyperpolarization. Thought to regulate neuronal excitability by contributing to the slow component of synaptic afterhyperpolarization. Does not function as a small conductance calcium-activated potassium channel. Selectively suppresses endogenous KCNN3 currents, in a dominant-negative fashion by decreasing the abundance of functional channels in the plasma membrane, possibly by selectively coassembling with and sequestering native KCNN3 protein in intracellular compartments. This dominant inhibitory effect extends to other members of the SK subfamily. The protein is Small conductance calcium-activated potassium channel protein 3 of Homo sapiens (Human).